The primary structure comprises 635 residues: MVSIRLPDGSVRQYEHPVTVAEVAASIGPGLAKAALGGKIDGELVDTSALIDHDVALAIVTEKDADGLDIIRHSTAHLLAYAVKDLYPEAQVTIGPVIDNGFYYDFAYNRPFTPEDLEKIEKRMQELAKKDEPVSRRVVSRDEAVDYFKSIGEKYKAEIIESIPATDDIKLYSHGGFTDLCRGPHVPSTGKLKVFKLMKVAGAYWRGDSKNEQLQRIYGTAWTKKEDQEAYLHMLEEAEKRDHRKLGKQLDLFHMQDESPGMVFWHPRGWTLWQQVEQYMRRRVNDAGYLEIKTPMIMDRSLWEASGHWQNYRENMFTTESEKRDYAIKPMNCPGHVQVFNHGLRSYRDLPLRYAEFGSCHRNESSGALHGLMRVRGFVQDDAHIFCTEDQFISESIAFNTLAMSVYKDFGFDNVEIKLSLRPDARAGTDETWDRAEQGLREALTACGVTWEELPGEGAFYGPKVEYHIKDALGRSWQCGTLQLDMVLPERLGAEYVAEDNSRRRPIMLHRAIVGSMERFLGILIEHHAGAMPAWLAPMQVVVMNIAESQAEYAQSLAQSLQKQGVRVEADLRNEKISYKIREHTLEKVPYLLVVGDKEREAQTVAVRARGGVDLGVMPPDTFIERLRQDVQSFN.

In terms of domain architecture, TGS spans 1-61; that stretch reads MVSIRLPDGS…DHDVALAIVT (61 aa). Positions 242 to 533 are catalytic; that stretch reads DHRKLGKQLD…LIEHHAGAMP (292 aa). Residues Cys333, His384, and His510 each contribute to the Zn(2+) site.

The protein belongs to the class-II aminoacyl-tRNA synthetase family. Homodimer. The cofactor is Zn(2+).

The protein localises to the cytoplasm. The enzyme catalyses tRNA(Thr) + L-threonine + ATP = L-threonyl-tRNA(Thr) + AMP + diphosphate + H(+). Catalyzes the attachment of threonine to tRNA(Thr) in a two-step reaction: L-threonine is first activated by ATP to form Thr-AMP and then transferred to the acceptor end of tRNA(Thr). Also edits incorrectly charged L-seryl-tRNA(Thr). This is Threonine--tRNA ligase from Paraburkholderia phytofirmans (strain DSM 17436 / LMG 22146 / PsJN) (Burkholderia phytofirmans).